We begin with the raw amino-acid sequence, 468 residues long: Methylenetetrahydrofolate--tRNA-(uracil-5-)-methyltransferase TrmFO (468 aa).

13 to 18 (GGGLAG) lines the FAD pocket.

Belongs to the MnmG family. TrmFO subfamily. FAD serves as cofactor.

The protein resides in the cytoplasm. The catalysed reaction is uridine(54) in tRNA + (6R)-5,10-methylene-5,6,7,8-tetrahydrofolate + NADH + H(+) = 5-methyluridine(54) in tRNA + (6S)-5,6,7,8-tetrahydrofolate + NAD(+). It carries out the reaction uridine(54) in tRNA + (6R)-5,10-methylene-5,6,7,8-tetrahydrofolate + NADPH + H(+) = 5-methyluridine(54) in tRNA + (6S)-5,6,7,8-tetrahydrofolate + NADP(+). Functionally, catalyzes the folate-dependent formation of 5-methyl-uridine at position 54 (M-5-U54) in all tRNAs. The sequence is that of Methylenetetrahydrofolate--tRNA-(uracil-5-)-methyltransferase TrmFO from Bartonella henselae (strain ATCC 49882 / DSM 28221 / CCUG 30454 / Houston 1) (Rochalimaea henselae).